A 455-amino-acid polypeptide reads, in one-letter code: tRNA modification GTPase MnmE (455 aa).

(6S)-5-formyl-5,6,7,8-tetrahydrofolate is bound by residues arginine 24, glutamate 81, and lysine 120. Positions 216–378 (GMTVVIAGRP…LREHLKACMG (163 aa)) constitute a TrmE-type G domain. Asparagine 226 lines the K(+) pocket. GTP contacts are provided by residues 226–231 (NAGKSS), 245–251 (TDIAGTT), 270–273 (DTAG), and 335–338 (NKAD). Serine 230 contacts Mg(2+). The K(+) site is built by threonine 245, isoleucine 247, and threonine 250. A Mg(2+)-binding site is contributed by threonine 251. Residue lysine 455 coordinates (6S)-5-formyl-5,6,7,8-tetrahydrofolate.

The protein belongs to the TRAFAC class TrmE-Era-EngA-EngB-Septin-like GTPase superfamily. TrmE GTPase family. As to quaternary structure, homodimer. Heterotetramer of two MnmE and two MnmG subunits. K(+) serves as cofactor.

The protein localises to the cytoplasm. Functionally, exhibits a very high intrinsic GTPase hydrolysis rate. Involved in the addition of a carboxymethylaminomethyl (cmnm) group at the wobble position (U34) of certain tRNAs, forming tRNA-cmnm(5)s(2)U34. The protein is tRNA modification GTPase MnmE of Ectopseudomonas mendocina (strain ymp) (Pseudomonas mendocina).